Here is a 240-residue protein sequence, read N- to C-terminus: RNA polymerase sigma factor SigI (240 aa).

Positions 56–69 match the Polymerase core binding motif; it reads DEYSIGLFAFNEAI. The segment at residues 194-213 is a DNA-binding region (H-T-H motif); it reads LKHIEPRVRVSRKTLERHRK.

The protein belongs to the sigma-70 factor family. SigI subfamily. As to quaternary structure, interacts with RsgI.

Its subcellular location is the cytoplasm. With respect to regulation, negatively regulated by the anti-sigma-I factor RsgI. In terms of biological role, sigma factors are initiation factors that promote the attachment of RNA polymerase to specific initiation sites and are then released. This sigma factor contributes to both stress response and virulence gene expression. In Bacillus anthracis, this protein is RNA polymerase sigma factor SigI.